A 1055-amino-acid chain; its full sequence is Activated CDC42 kinase 1 (1055 aa).

Residues 1–110 (MQPEEGTGWL…PSPTPGSLPG (110 aa)) are SAM-like domain. The interval 91-110 (SQHSQSTFRKPSPTPGSLPG) is disordered. Thr113 bears the Phosphothreonine mark. Residues 126–385 (LRLLEKLGDG…PTFVALRDFL (260 aa)) form the Protein kinase domain. ATP-binding positions include 132-140 (LGDGSFGVV) and Lys158. The Proton acceptor role is filled by Asp252. The residue at position 284 (Tyr284) is a Phosphotyrosine; by SRC and autocatalysis. Residues 388–448 (AQPTDMRALQ…PRNVVTSVAG (61 aa)) enclose the SH3 domain. Residues 454 to 466 (ISQPLQNSFIHTG) enclose the CRIB domain. The tract at residues 505–548 (RPTQHLGRVKREPPPRPPQPAIFTQKTTYDPVSEDPDPLSSDFK) is disordered. A phosphotyrosine mark is found at Pro518 and Tyr533. Positions 638-667 (DWDARPLPPPPAYDDVAQDEDDFEVCSINS) are required for interaction with SRC. The tract at residues 647–650 (PPAY) is required for interaction with NEDD4. The interval 737-855 (TGQLTPSPTP…QVIQAPGPRA (119 aa)) is disordered. The segment at 748 to 891 (GDDKPQVPPR…PYLERYQRFL (144 aa)) is EBD domain. Pro residues-rich tracts occupy residues 753-764 (QVPPRVPIPPRP) and 787-798 (PASPPRVPPREP). Residues 817–827 (PLPHRLSSSPG) are compositionally biased toward low complexity. Position 842 is a phosphotyrosine (Tyr842). Arg854 bears the Omega-N-methylarginine mark. Tyr874 and Tyr887 each carry phosphotyrosine. The residue at position 896 (Ser896) is a Phosphoserine. The disordered stretch occupies residues 896-952 (SPEEPAALPVPPLLPPPSTPAPAAPTATVRPMPQAAPDPKANFSTNNSNPGARPPSL). A compositionally biased stretch (pro residues) spans 903–918 (LPVPPLLPPPSTPAPA). The UBA domain occupies 973 to 1013 (PADKVQMLQAMVHGVTTEECQAALQSHSWSVQRAAQYLKVE).

Belongs to the protein kinase superfamily. Tyr protein kinase family. As to quaternary structure, homodimer. Interacts with CSPG4 (activated). Interacts with MERTK (activated); stimulates autophosphorylation. May interact (phosphorylated) with HSP90AB1; maintains kinase activity. Interacts with NPHP1. Interacts with SNX9 (via SH3 domain). Interacts with SRC (via SH2 and SH3 domain). Part of a collagen stimulated complex involved in cell migration composed of CDC42, CRK, TNK2 and BCAR1/p130cas. Interacts with BCAR1/p130cas via SH3 domains. Forms complexes with GRB2 and numerous receptor tyrosine kinases (RTK) including LTK, AXL or PDGFRL, in which GRB2 promotes RTK recruitment by TNK2. Interacts with CDC42. Interacts with EGFR, and this interaction is dependent on EGF stimulation and kinase activity of EGFR. Interacts (via kinase domain) with AKT1. Interacts with NEDD4 (via WW3 domain). NEDD4L and EGF promote association with NEDD4. Requires Mg(2+) as cofactor. Autophosphorylation regulates kinase activity. Phosphorylation on Tyr-533 is required for interaction with SRC and is observed during association with clathrin-coated pits. Post-translationally, polyubiquitinated by NEDD4 and NEDD4L. Degradation can be induced by EGF and is lysosome-dependent. In terms of tissue distribution, ubiquitously present in all tissues tested. Highly expressed in the adult central nervous system (CNS); hippocampus, neocortex, and cerebellum, both at dendritic spines and presynaptic axon terminals. Levels are strongly increased during enhanced neural activity.

It localises to the cell membrane. Its subcellular location is the nucleus. The protein resides in the endosome. The protein localises to the cell junction. It is found in the adherens junction. It localises to the cytoplasmic vesicle membrane. Its subcellular location is the cytoplasmic vesicle. The protein resides in the clathrin-coated vesicle. The protein localises to the membrane. It is found in the clathrin-coated pit. It localises to the cytoplasm. Its subcellular location is the cytosol. It catalyses the reaction L-tyrosyl-[protein] + ATP = O-phospho-L-tyrosyl-[protein] + ADP + H(+). The catalysed reaction is L-seryl-[protein] + ATP = O-phospho-L-seryl-[protein] + ADP + H(+). The enzyme catalyses L-threonyl-[protein] + ATP = O-phospho-L-threonyl-[protein] + ADP + H(+). Functionally, non-receptor tyrosine-protein and serine/threonine-protein kinase that is implicated in cell spreading and migration, cell survival, cell growth and proliferation. Transduces extracellular signals to cytosolic and nuclear effectors. Phosphorylates AKT1, AR, MCF2, WASL and WWOX. Implicated in trafficking and clathrin-mediated endocytosis through binding to epidermal growth factor receptor (EGFR) and clathrin. Binds to both poly- and mono-ubiquitin and regulates ligand-induced degradation of EGFR, thereby contributing to the accumulation of EGFR at the limiting membrane of early endosomes. Downstream effector of CDC42 which mediates CDC42-dependent cell migration via phosphorylation of BCAR1. May be involved both in adult synaptic function and plasticity and in brain development. Activates AKT1 by phosphorylating it on 'Tyr-176'. Phosphorylates AR on 'Tyr-267' and 'Tyr-363' thereby promoting its recruitment to androgen-responsive enhancers (AREs). Phosphorylates WWOX on 'Tyr-287'. Phosphorylates MCF2, thereby enhancing its activity as a guanine nucleotide exchange factor (GEF) toward Rho family proteins. Contributes to the control of AXL receptor levels. Confers metastatic properties on cancer cells and promotes tumor growth by negatively regulating tumor suppressor such as WWOX and positively regulating pro-survival factors such as AKT1 and AR. The polypeptide is Activated CDC42 kinase 1 (Tnk2) (Mus musculus (Mouse)).